The chain runs to 28 residues: Dermaseptin-SP1 (28 aa).

Expressed by the skin glands.

It is found in the secreted. Its function is as follows. Probable antimicrobial peptide which stimulates insulin-release in glucose-responsive BRIN-BD 11 cells. The protein is Dermaseptin-SP1 of Agalychnis spurrelli (Gliding leaf frog).